A 389-amino-acid chain; its full sequence is P2X purinoceptor 4a (389 aa).

Residues 1-36 (MSESVGCCDSVSQCFFDYYTSKILIIRSKKVGTLNR) lie on the Cytoplasmic side of the membrane. Residues 37–57 (FTQALVIAYVIGYVCVYNKGY) form a helical membrane-spanning segment. Residues 58–343 (QDTDTVLSSV…NIIPTLLNMG (286 aa)) lie on the Extracellular side of the membrane. Lysine 70 and lysine 72 together coordinate ATP. Residues lysine 70 and lysine 72 each contribute to the CTP site. N-linked (GlcNAc...) asparagine glycosylation is found at asparagine 78 and asparagine 113. Intrachain disulfides connect cysteine 119/cysteine 168, cysteine 129/cysteine 152, and cysteine 135/cysteine 162. Residue arginine 143 coordinates CTP. An N-linked (GlcNAc...) asparagine glycan is attached at asparagine 187. Positions 189 and 191 each coordinate ATP. Threonine 189 lines the CTP pocket. An N-linked (GlcNAc...) asparagine glycan is attached at asparagine 213. Disulfide bonds link cysteine 220-cysteine 230 and cysteine 264-cysteine 273. Positions 296, 298, and 316 each coordinate ATP. CTP-binding residues include asparagine 296, arginine 298, and lysine 316. Residues 344 to 364 (AGLALLGLVNVICDWIVLTFM) traverse the membrane as a helical segment. At 365–389 (KRKQHYKEQKYTYVDDFGLLHNEDK) the chain is on the cytoplasmic side.

The protein belongs to the P2X receptor family. In terms of assembly, functional P2XRs are organized as homomeric and heteromeric trimers. Forms homotrimer.

Its subcellular location is the cell membrane. It is found in the lysosome membrane. It catalyses the reaction K(+)(in) = K(+)(out). It carries out the reaction Na(+)(in) = Na(+)(out). The enzyme catalyses Ca(2+)(in) = Ca(2+)(out). Its activity is regulated as follows. Activated by ATP. pH-dependent and inhibited by acidic pH. Functionally, ATP-gated nonselective transmembrane cation channel permeable to potassium, sodium and calcium. CTP, but not GTP or UTP, functions as a weak affinity agonist for P2RX4. Activated by extracellularly released ATP, it plays multiple role in immunity and central nervous system physiology. Could also function as an ATP-gated cation channel of lysosomal membranes. This Danio rerio (Zebrafish) protein is P2X purinoceptor 4a (p2rx4a).